We begin with the raw amino-acid sequence, 378 residues long: Ecotin-like protein 3 (378 aa).

2 disordered regions span residues 191–216 (HRLS…HAAP) and 238–378 (PQNN…KADP). Residues 274-287 (NEPSPSRPRLSSTE) show a composition bias toward polar residues. Positions 337 to 348 (RKAEDNVYEKTM) are enriched in basic and acidic residues. The span at 362 to 378 (KASASSKKSGNGSKADP) shows a compositional bias: low complexity.

Belongs to the protease inhibitor I11 (ecotin) family.

This Leishmania infantum protein is Ecotin-like protein 3.